The following is a 279-amino-acid chain: NAD kinase (279 aa).

Asp-61 acts as the Proton acceptor in catalysis. Residues Asp-61–Gly-62, Asn-138–Asp-139, Lys-149, Lys-166, Asp-168, and Thr-179–Ser-184 contribute to the NAD(+) site.

It belongs to the NAD kinase family. A divalent metal cation is required as a cofactor.

It is found in the cytoplasm. The catalysed reaction is NAD(+) + ATP = ADP + NADP(+) + H(+). Involved in the regulation of the intracellular balance of NAD and NADP, and is a key enzyme in the biosynthesis of NADP. Catalyzes specifically the phosphorylation on 2'-hydroxyl of the adenosine moiety of NAD to yield NADP. This Borreliella burgdorferi (strain ATCC 35210 / DSM 4680 / CIP 102532 / B31) (Borrelia burgdorferi) protein is NAD kinase.